Consider the following 61-residue polypeptide: UPF0434 protein PSPA7_2181 (61 aa).

The protein belongs to the UPF0434 family.

The protein is UPF0434 protein PSPA7_2181 of Pseudomonas paraeruginosa (strain DSM 24068 / PA7) (Pseudomonas aeruginosa (strain PA7)).